A 115-amino-acid polypeptide reads, in one-letter code: MVKLHFSRNLRLLKPDHFAFVFQKPKLVRIQQMVILGRINTLVYPRVGMIIAKKYIKLAHERNHIKRLIRESFRLNQHKLCIMDFIIIAKSGLTKMNNFDIIKALEKLWHRYYRL.

This sequence belongs to the RnpA family. In terms of assembly, consists of a catalytic RNA component (M1 or rnpB) and a protein subunit.

The enzyme catalyses Endonucleolytic cleavage of RNA, removing 5'-extranucleotides from tRNA precursor.. Functionally, RNaseP catalyzes the removal of the 5'-leader sequence from pre-tRNA to produce the mature 5'-terminus. It can also cleave other RNA substrates such as 4.5S RNA. The protein component plays an auxiliary but essential role in vivo by binding to the 5'-leader sequence and broadening the substrate specificity of the ribozyme. The protein is Ribonuclease P protein component of Baumannia cicadellinicola subsp. Homalodisca coagulata.